Here is a 691-residue protein sequence, read N- to C-terminus: Protein vreteno (691 aa).

The segment at 128-155 (QKEREITSDPVTSTEPMPTPGPAISATE) is disordered. Tudor domains are found at residues 366–427 (KLQS…LAGL) and 573–630 (APPI…FIFP).

In terms of assembly, interacts with aub and piwi. As to expression, gonad-specific.

The protein resides in the cytoplasm. Its subcellular location is the cytoplasmic ribonucleoprotein granule. Its function is as follows. Gonad-specific protein essential for germline development to repress transposable elements and preventing their mobilization, which is essential for the germline integrity. Acts via the piRNA metabolic process in both germline and somatic gonadal tissues by mediating the repression of transposable elements during meiosis. Required for primary piRNA biogenesis in both germline and somatic gonadal tissues. In Drosophila melanogaster (Fruit fly), this protein is Protein vreteno (vret).